A 267-amino-acid chain; its full sequence is Enolase-phosphatase E1 (267 aa).

The Mg(2+) site is built by Asp-11 and Glu-13. Substrate is bound by residues 155–156 (SS) and Lys-189. Asp-215 is a binding site for Mg(2+).

It belongs to the HAD-like hydrolase superfamily. MasA/MtnC family. As to quaternary structure, monomer. The cofactor is Mg(2+).

It is found in the cytoplasm. Its subcellular location is the nucleus. The enzyme catalyses 5-methylsulfanyl-2,3-dioxopentyl phosphate + H2O = 1,2-dihydroxy-5-(methylsulfanyl)pent-1-en-3-one + phosphate. It participates in amino-acid biosynthesis; L-methionine biosynthesis via salvage pathway; L-methionine from S-methyl-5-thio-alpha-D-ribose 1-phosphate: step 3/6. The protein operates within amino-acid biosynthesis; L-methionine biosynthesis via salvage pathway; L-methionine from S-methyl-5-thio-alpha-D-ribose 1-phosphate: step 4/6. Bifunctional enzyme that catalyzes the enolization of 2,3-diketo-5-methylthiopentyl-1-phosphate (DK-MTP-1-P) into the intermediate 2-hydroxy-3-keto-5-methylthiopentenyl-1-phosphate (HK-MTPenyl-1-P), which is then dephosphorylated to form the acireductone 1,2-dihydroxy-3-keto-5-methylthiopentene (DHK-MTPene). The polypeptide is Enolase-phosphatase E1 (enoph1) (Dictyostelium discoideum (Social amoeba)).